A 537-amino-acid polypeptide reads, in one-letter code: MRRNAVIRSAIMPSLLGAALVAAVPQAFASNLIFCSEGSPAGFDPAQYTTGTDFDAAAETVFNRLTQFERGGTKVLPGLAESWDVSDDGKTYTFHLRKGVKFHSTDYFKPTREFNADDVLFTFERMLDKDHPFRKAYPTEFPYFTDMGLDKNIARIEKLDEHTVKFTLNEVDAAFIQNLAMPFPSIQSAEYAAQLLKQGKASDINQKPIGTGPFVFSRYQKDAQIRFKGNKDYWKPDEVKVDNLIFAINTDASVRAQKLKAGECQITLNPRPADLDALKKDPNLNLPSQAGFNLGYIAYNVTHKPFDKLEVRQALDMAVNKQAIIDAVYQGAGQLASNGMPPTQWSYDETIKDAPYDPAKARELLKKAGVAEGTEITLWAMPVQRPYNPNAKLMAEMLQNDWAKIGIKAKIVTYEWGEYIKRAKGGEHDAMLIGWSGDNGDPDNWLGTLYGCDAVDGNNFSKWCDAGYDKLVKDAKRTTDQGKRTELYKQAQHILKEQVPITPIAHSTVYQPMRKTVHDFRISPFGLNSFYEVSVGK.

An N-terminal signal peptide occupies residues 1–29 (MRRNAVIRSAIMPSLLGAALVAAVPQAFA).

It belongs to the bacterial solute-binding protein 5 family. In terms of assembly, the complex is composed of two ATP-binding proteins (DppD and DppF), two transmembrane proteins (DppB and DppC) and a solute-binding protein (DppA1). Five orthologous SBPs (DppA1-A5) are present in P.aeruginosa, which increases the substrate specificity of the DppBCDF transporter.

Functionally, part of the ABC transporter DppABCDF involved in the uptake of various di/tripeptides. Prefers dipeptides with acidic residues at the C-terminal end. Involved in the uptake of phaseolotoxin, a toxic tripeptide inhibiting the enzyme ornithine carbamoyltransferase. The sequence is that of Di/tripeptide-binding protein 1 from Pseudomonas aeruginosa (strain UCBPP-PA14).